We begin with the raw amino-acid sequence, 326 residues long: N-acetyl-gamma-glutamyl-phosphate reductase (326 aa).

The active site involves Cys-155.

Belongs to the NAGSA dehydrogenase family. Type 1 subfamily.

Its subcellular location is the cytoplasm. It carries out the reaction N-acetyl-L-glutamate 5-semialdehyde + phosphate + NADP(+) = N-acetyl-L-glutamyl 5-phosphate + NADPH + H(+). The protein operates within amino-acid biosynthesis; L-arginine biosynthesis; N(2)-acetyl-L-ornithine from L-glutamate: step 3/4. Catalyzes the NADPH-dependent reduction of N-acetyl-5-glutamyl phosphate to yield N-acetyl-L-glutamate 5-semialdehyde. The sequence is that of N-acetyl-gamma-glutamyl-phosphate reductase from Shewanella baltica (strain OS223).